We begin with the raw amino-acid sequence, 611 residues long: CRS2-associated factor 2, chloroplastic (611 aa).

The transit peptide at Met1–Ser58 directs the protein to the chloroplast. Residues Met1–Thr72 form a disordered region. The segment covering Gln55–Thr72 has biased composition (polar residues). 2 CRM domains span residues Glu232–Arg328 and Asp350–Pro446. The segment at Lys486–Asn509 is CRS2 binding. The disordered stretch occupies residues Met554–Asp578.

In terms of assembly, interacts with CRS2 and RNA. Part of large ribonucleo-protein complexes that include group IIB introns, CRS2 and CAF2.

The protein resides in the plastid. It is found in the chloroplast stroma. Its function is as follows. Required for the splicing of group IIB introns in chloroplasts. Forms splicing particles with CRS2. Interacts with RNA and confers intron specificity of the splicing particles. In Zea mays (Maize), this protein is CRS2-associated factor 2, chloroplastic (CAF2).